The chain runs to 179 residues: Apoptosis regulator Bcl-2 homolog (179 aa).

The BH1 signature appears at 76-95; that stretch reads ELFKDLINWGRICGFIVFSA. Residues 126-141 carry the BH2 motif; it reads PWMISHGGQEEFLAFS.

Belongs to the Bcl-2 family. In terms of assembly, interacts with host BECN1 (via BH3 homology domain); this interaction allows the virus to inhibit BECN1, and thus autophagy. Interacts with host BID. Interacts with host BAX.

The protein localises to the host mitochondrion. Its subcellular location is the host endoplasmic reticulum. Its function is as follows. Suppresses apoptosis in host cell to promote the viral replication. Has the ability to potentially bind to all the members of the proapoptotic Bcl-2 family. Inhibits autophagy by interacting with host Beclin 1 (BECN1). The sequence is that of Apoptosis regulator Bcl-2 homolog from Ornithodoros (relapsing fever ticks).